We begin with the raw amino-acid sequence, 673 residues long: UvrABC system protein B (673 aa).

The Helicase ATP-binding domain occupies 28–414; it reads ASILQNKRSQ…EAGGEIVEQL (387 aa). 41–48 serves as a coordination point for ATP; that stretch reads GITGSGKT. Positions 94–117 match the Beta-hairpin motif; the sequence is YYDYYQPEAYVPRTDTYIEKDMSI. In terms of domain architecture, Helicase C-terminal spans 433 to 595; that stretch reads QVDDCLAEIR…ITPRTVKREI (163 aa). One can recognise a UVR domain in the interval 633–668; that stretch reads RLKIKECEKEMKKAAKEFRFEEAADWRDQMRRYQQI.

This sequence belongs to the UvrB family. Forms a heterotetramer with UvrA during the search for lesions. Interacts with UvrC in an incision complex.

The protein localises to the cytoplasm. Functionally, the UvrABC repair system catalyzes the recognition and processing of DNA lesions. A damage recognition complex composed of 2 UvrA and 2 UvrB subunits scans DNA for abnormalities. Upon binding of the UvrA(2)B(2) complex to a putative damaged site, the DNA wraps around one UvrB monomer. DNA wrap is dependent on ATP binding by UvrB and probably causes local melting of the DNA helix, facilitating insertion of UvrB beta-hairpin between the DNA strands. Then UvrB probes one DNA strand for the presence of a lesion. If a lesion is found the UvrA subunits dissociate and the UvrB-DNA preincision complex is formed. This complex is subsequently bound by UvrC and the second UvrB is released. If no lesion is found, the DNA wraps around the other UvrB subunit that will check the other stand for damage. The polypeptide is UvrABC system protein B (Protochlamydia amoebophila (strain UWE25)).